A 100-amino-acid polypeptide reads, in one-letter code: Small ribosomal subunit protein uS14c (100 aa).

This sequence belongs to the universal ribosomal protein uS14 family. Part of the 30S ribosomal subunit.

Its subcellular location is the plastid. Binds 16S rRNA, required for the assembly of 30S particles. The chain is Small ribosomal subunit protein uS14c from Cuscuta obtusiflora (Peruvian dodder).